The sequence spans 475 residues: MAPQTETRAGAGFKAGVKDYRLTYYTPDYIVKDTDILAAFRMTPQPGVPPEECGAAVAAESSTGTWTTVWTDGLTSLDRYKGRCYDIEPVPGEENQYIAYVAYPLDLFEEGSVTNLFTSIVGNVFGFKALRALRLEDLRIPAAYAKTFQGPPHGIQVERDKLNKYGRGLLGCTIKPKLGLSAKNYGRAVYECLRGGLDFTKDDENVNSQPFMRWRDRFLFVAEAIYKAQSETGEIKGHYLNATAGTCEEMLKRAVCAKELGVPIIMHDYLTGGFTANTSLSNYCRDHGLLLHIHRAMHAVIDRQRNHGIHFRVLAKALRMSGGDHLHSGTVVGKLEGEREVTLGFVDLMRDDYIEKDRSRGIYFTQDWVSLPGVMPVASGGIHVWHMPALVEIFGDDACLQFGGGTLGHPWGNAPGAAANRVALEACTQARNEGRDLAREGGDVIRAACKWSPELAAACEVWKEIKFEFETIDKL.

A propeptide spanning residues 1-2 (MA) is cleaved from the precursor. Pro-3 is modified (N-acetylproline). Lys-14 is subject to N6,N6,N6-trimethyllysine. Substrate is bound by residues Asn-123 and Thr-173. Lys-175 (proton acceptor) is an active-site residue. Lys-177 serves as a coordination point for substrate. Positions 201, 203, and 204 each coordinate Mg(2+). Lys-201 is modified (N6-carboxylysine). The Proton acceptor role is filled by His-294. Residues Arg-295, His-327, and Ser-379 each contribute to the substrate site.

The protein belongs to the RuBisCO large chain family. Type I subfamily. As to quaternary structure, heterohexadecamer of 8 large chains and 8 small chains; disulfide-linked. The disulfide link is formed within the large subunit homodimers. The cofactor is Mg(2+). The disulfide bond which can form in the large chain dimeric partners within the hexadecamer appears to be associated with oxidative stress and protein turnover.

The protein localises to the plastid. Its subcellular location is the chloroplast. The enzyme catalyses 2 (2R)-3-phosphoglycerate + 2 H(+) = D-ribulose 1,5-bisphosphate + CO2 + H2O. The catalysed reaction is D-ribulose 1,5-bisphosphate + O2 = 2-phosphoglycolate + (2R)-3-phosphoglycerate + 2 H(+). Functionally, ruBisCO catalyzes two reactions: the carboxylation of D-ribulose 1,5-bisphosphate, the primary event in carbon dioxide fixation, as well as the oxidative fragmentation of the pentose substrate in the photorespiration process. Both reactions occur simultaneously and in competition at the same active site. This chain is Ribulose bisphosphate carboxylase large chain, found in Oedogonium cardiacum (Filamentous green alga).